A 957-amino-acid chain; its full sequence is Melanoma-associated antigen E1 (957 aa).

Residues 1–455 (MSLVSQNSRR…DSEGPKGAEG (455 aa)) are disordered. Composition is skewed to polar residues over residues 85 to 96 (SEASSASGQPTI) and 104 to 130 (VLPT…SVTL). Over residues 138 to 162 (TSRPPTSSEEPSTSVPPTASEVPST) the composition is skewed to low complexity. 5 stretches are compositionally biased toward polar residues: residues 219-244 (GLST…TEGL), 268-320 (PSTS…STSV), 329-344 (STSV…STSV), 364-380 (LSTS…DTSV), and 414-428 (TLFS…NPSK). 2 MAGE domains span residues 491–690 (MEQN…YNEA) and 745–936 (LESK…YREA). Residues 743–957 (SRLESKARKL…HRQIFVHNFR (215 aa)) are interaction with DTNA.

As to quaternary structure, interacts with DTNA. Interacts with TRIM28.

Its subcellular location is the cytoplasm. It localises to the perinuclear region. The protein resides in the nucleus. It is found in the cell membrane. In terms of biological role, may enhance ubiquitin ligase activity of RING-type zinc finger-containing E3 ubiquitin-protein ligases. Proposed to act through recruitment and/or stabilization of the Ubl-conjugating enzyme (E2) at the E3:substrate complex. The protein is Melanoma-associated antigen E1 (MAGEE1) of Homo sapiens (Human).